Consider the following 152-residue polypeptide: Deoxyuridine 5'-triphosphate nucleotidohydrolase (152 aa).

Substrate is bound by residues 71-73, N84, 88-90, and M98; these read RSG and LID.

Belongs to the dUTPase family. It depends on Mg(2+) as a cofactor.

It catalyses the reaction dUTP + H2O = dUMP + diphosphate + H(+). Its pathway is pyrimidine metabolism; dUMP biosynthesis; dUMP from dCTP (dUTP route): step 2/2. Its function is as follows. This enzyme is involved in nucleotide metabolism: it produces dUMP, the immediate precursor of thymidine nucleotides and it decreases the intracellular concentration of dUTP so that uracil cannot be incorporated into DNA. This is Deoxyuridine 5'-triphosphate nucleotidohydrolase from Serratia proteamaculans (strain 568).